The chain runs to 132 residues: Small ribosomal subunit protein uS8 (132 aa).

It belongs to the universal ribosomal protein uS8 family. Part of the 30S ribosomal subunit. Contacts proteins S5 and S12.

Its function is as follows. One of the primary rRNA binding proteins, it binds directly to 16S rRNA central domain where it helps coordinate assembly of the platform of the 30S subunit. This Lactobacillus helveticus (strain DPC 4571) protein is Small ribosomal subunit protein uS8.